The chain runs to 287 residues: Putative ankyrin repeat protein R791 (287 aa).

ANK repeat units follow at residues 40–71, 76–105, 107–134, 135–164, 165–194, 196–224, and 225–254; these read HNFN…PLVF, NVHD…NIET, NDDV…IDNK, TIFE…DIKA, KDNF…TIDI, DDTY…DYRT, and VDDL…DIEA.

The chain is Putative ankyrin repeat protein R791 from Acanthamoeba polyphaga (Amoeba).